Here is a 392-residue protein sequence, read N- to C-terminus: Succinate--CoA ligase [ADP-forming] subunit beta (392 aa).

Residues 9-248 (KGILKQFGVA…ITEEDPLEYE (240 aa)) form the ATP-grasp domain. Residues Lys-50, 57-59 (GRG), Glu-103, Met-106, and Glu-111 each bind ATP. Mg(2+) contacts are provided by Asn-203 and Asp-217. Substrate is bound by residues Asn-268 and 325 to 327 (GIV).

This sequence belongs to the succinate/malate CoA ligase beta subunit family. As to quaternary structure, heterotetramer of two alpha and two beta subunits. Mg(2+) is required as a cofactor.

The catalysed reaction is succinate + ATP + CoA = succinyl-CoA + ADP + phosphate. The enzyme catalyses GTP + succinate + CoA = succinyl-CoA + GDP + phosphate. It participates in carbohydrate metabolism; tricarboxylic acid cycle; succinate from succinyl-CoA (ligase route): step 1/1. In terms of biological role, succinyl-CoA synthetase functions in the citric acid cycle (TCA), coupling the hydrolysis of succinyl-CoA to the synthesis of either ATP or GTP and thus represents the only step of substrate-level phosphorylation in the TCA. The beta subunit provides nucleotide specificity of the enzyme and binds the substrate succinate, while the binding sites for coenzyme A and phosphate are found in the alpha subunit. The chain is Succinate--CoA ligase [ADP-forming] subunit beta from Chlorobaculum parvum (strain DSM 263 / NCIMB 8327) (Chlorobium vibrioforme subsp. thiosulfatophilum).